A 442-amino-acid chain; its full sequence is Glutamyl-tRNA(Gln) amidotransferase subunit A (442 aa).

Active-site charge relay system residues include lysine 50 and serine 125. Serine 149 serves as the catalytic Acyl-ester intermediate.

It belongs to the amidase family. GatA subfamily. In terms of assembly, heterotrimer of A, B and C subunits.

It carries out the reaction L-glutamyl-tRNA(Gln) + L-glutamine + ATP + H2O = L-glutaminyl-tRNA(Gln) + L-glutamate + ADP + phosphate + H(+). Its function is as follows. Allows the formation of correctly charged Gln-tRNA(Gln) through the transamidation of misacylated Glu-tRNA(Gln) in organisms which lack glutaminyl-tRNA synthetase. The reaction takes place in the presence of glutamine and ATP through an activated gamma-phospho-Glu-tRNA(Gln). The sequence is that of Glutamyl-tRNA(Gln) amidotransferase subunit A from Nitratiruptor sp. (strain SB155-2).